The following is a 124-amino-acid chain: Sulfur globule protein CV2 (124 aa).

Positions M1 to A22 are cleaved as a signal peptide.

The protein envelope of the sulfur globules is composed of the three different proteins CV1, CV2 and CV3.

Its function is as follows. Structural protein of the sulfur globules, which are intracellular globules that serve for sulfur storage in purple sulfur bacteria. The chain is Sulfur globule protein CV2 (sgpB) from Allochromatium vinosum (strain ATCC 17899 / DSM 180 / NBRC 103801 / NCIMB 10441 / D) (Chromatium vinosum).